A 145-amino-acid polypeptide reads, in one-letter code: D-aminoacyl-tRNA deacylase (145 aa).

Positions 137–138 (GP) match the Gly-cisPro motif, important for rejection of L-amino acids motif.

It belongs to the DTD family. As to quaternary structure, homodimer.

The protein localises to the cytoplasm. It carries out the reaction glycyl-tRNA(Ala) + H2O = tRNA(Ala) + glycine + H(+). It catalyses the reaction a D-aminoacyl-tRNA + H2O = a tRNA + a D-alpha-amino acid + H(+). In terms of biological role, an aminoacyl-tRNA editing enzyme that deacylates mischarged D-aminoacyl-tRNAs. Also deacylates mischarged glycyl-tRNA(Ala), protecting cells against glycine mischarging by AlaRS. Acts via tRNA-based rather than protein-based catalysis; rejects L-amino acids rather than detecting D-amino acids in the active site. By recycling D-aminoacyl-tRNA to D-amino acids and free tRNA molecules, this enzyme counteracts the toxicity associated with the formation of D-aminoacyl-tRNA entities in vivo and helps enforce protein L-homochirality. The sequence is that of D-aminoacyl-tRNA deacylase from Photobacterium profundum (strain SS9).